The following is a 197-amino-acid chain: Small ribosomal subunit protein uS4B (197 aa).

Residues 88–153 (CRLDNMVYRM…IEKYLSNLKN (66 aa)) form the S4 RNA-binding domain.

The protein belongs to the universal ribosomal protein uS4 family. Part of the 30S ribosomal subunit. Contacts protein S5. The interaction surface between S4 and S5 is involved in control of translational fidelity.

In terms of biological role, one of the primary rRNA binding proteins, it binds directly to 16S rRNA where it nucleates assembly of the body of the 30S subunit. Its function is as follows. With S5 and S12 plays an important role in translational accuracy. This is Small ribosomal subunit protein uS4B from Alkaliphilus oremlandii (strain OhILAs) (Clostridium oremlandii (strain OhILAs)).